Consider the following 103-residue polypeptide: Large ribosomal subunit protein bL21 (103 aa).

It belongs to the bacterial ribosomal protein bL21 family. In terms of assembly, part of the 50S ribosomal subunit. Contacts protein L20.

Functionally, this protein binds to 23S rRNA in the presence of protein L20. This chain is Large ribosomal subunit protein bL21, found in Ectopseudomonas mendocina (strain ymp) (Pseudomonas mendocina).